Here is a 230-residue protein sequence, read N- to C-terminus: Orotidine 5'-phosphate decarboxylase (230 aa).

Substrate is bound by residues Asp-11, Lys-34, 61–70 (DLKLHDIPNT), Thr-117, Arg-179, Gln-188, Gly-208, and Arg-209. Lys-63 functions as the Proton donor in the catalytic mechanism.

Belongs to the OMP decarboxylase family. Type 1 subfamily. Homodimer.

The catalysed reaction is orotidine 5'-phosphate + H(+) = UMP + CO2. The protein operates within pyrimidine metabolism; UMP biosynthesis via de novo pathway; UMP from orotate: step 2/2. Functionally, catalyzes the decarboxylation of orotidine 5'-monophosphate (OMP) to uridine 5'-monophosphate (UMP). In Streptococcus pyogenes serotype M49 (strain NZ131), this protein is Orotidine 5'-phosphate decarboxylase.